A 197-amino-acid polypeptide reads, in one-letter code: Double homeobox protein 5 (197 aa).

DNA-binding regions (homeobox) lie at residues 46 to 105 (GRRM…LRQH) and 121 to 180 (GRRK…RGQS). Positions 101-127 (QLRQHRRQSRPWPGRRDPQKGRRKRTA) are disordered.

This sequence belongs to the paired homeobox family. As to expression, expressed in hepatoma Hep3B cells.

Its subcellular location is the nucleus. In Homo sapiens (Human), this protein is Double homeobox protein 5 (DUX5).